Here is a 225-residue protein sequence, read N- to C-terminus: DNA-binding response regulator MtrA (225 aa).

A Response regulatory domain is found at 4–117 (RILVVDDDAS…ELVARVRARL (114 aa)). Asp-53 is modified (4-aspartylphosphate). A DNA-binding region (ompR/PhoB-type) is located at residues 125 to 224 (AEMLSIADVD…VRGVGYKAGP (100 aa)).

Post-translationally, phosphorylated by MtrB.

Its function is as follows. Member of the two-component regulatory system MtrA/MtrB. This is DNA-binding response regulator MtrA (mtrA) from Mycobacterium leprae (strain TN).